The chain runs to 71 residues: Sec-independent protein translocase protein TatA (71 aa).

Residues Met-1–Gly-21 form a helical membrane-spanning segment. Positions Ala-47–Ser-71 are disordered. The span at Glu-49–Ser-71 shows a compositional bias: basic and acidic residues.

It belongs to the TatA/E family. As to quaternary structure, the Tat system comprises two distinct complexes: a TatABC complex, containing multiple copies of TatA, TatB and TatC subunits, and a separate TatA complex, containing only TatA subunits. Substrates initially bind to the TatABC complex, which probably triggers association of the separate TatA complex to form the active translocon.

Its subcellular location is the cell inner membrane. Its function is as follows. Part of the twin-arginine translocation (Tat) system that transports large folded proteins containing a characteristic twin-arginine motif in their signal peptide across membranes. TatA could form the protein-conducting channel of the Tat system. The chain is Sec-independent protein translocase protein TatA from Chelativorans sp. (strain BNC1).